The following is a 178-amino-acid chain: Large ribosomal subunit protein uL6 (178 aa).

This sequence belongs to the universal ribosomal protein uL6 family. In terms of assembly, part of the 50S ribosomal subunit.

In terms of biological role, this protein binds to the 23S rRNA, and is important in its secondary structure. It is located near the subunit interface in the base of the L7/L12 stalk, and near the tRNA binding site of the peptidyltransferase center. This chain is Large ribosomal subunit protein uL6, found in Streptococcus mutans serotype c (strain ATCC 700610 / UA159).